We begin with the raw amino-acid sequence, 33 residues long: NAD-reducing hydrogenase HoxS subunit gamma (33 aa).

The 2Fe-2S ferredoxin-type domain maps to 1-33; the sequence is SIEIEIDGVTVTTEESRTLVDVAAEAGVYIPTL.

The protein belongs to the complex I 75 kDa subunit family. As to quaternary structure, tetramer of an alpha and a gamma subunits (flavin-containing dimer), and a delta and a nickel-containing beta subunits (hydrogenase dimer). [4Fe-4S] cluster is required as a cofactor.

The protein localises to the cytoplasm. It carries out the reaction H2 + NAD(+) = NADH + H(+). Functionally, subunits alpha and gamma of HoxS constitute an NADH--oxidoreductase. This chain is NAD-reducing hydrogenase HoxS subunit gamma (hoxU), found in Rhodococcus opacus (Nocardia opaca).